The sequence spans 117 residues: Replication initiation control protein YabA (117 aa).

Positions 87, 89, 103, and 106 each coordinate Zn(2+).

This sequence belongs to the YabA family. In terms of assembly, homotetramer. Interacts with both DnaA and DnaN, acting as a bridge between these two proteins. The cofactor is Zn(2+).

Its subcellular location is the cytoplasm. The protein resides in the nucleoid. In terms of biological role, involved in control of chromosome replication initiation. Inhibits the cooperative binding of DnaA to the oriC region, thus negatively regulating initiation of chromosome replication. Inhibits the ability of DnaA-ATP to form a helix on DNA; does not disassemble preformed DnaA-DNA helices. Decreases the residence time of DnaA on the chromosome at its binding sites (oriC, replication forks and promoter-binding sites). Tethers DnaA to the replication machinery via the DNA polymerase beta sliding clamp subunit (dnaN). Associates with oriC and other DnaA targets on the chromosome in a DnaA-dependent manner. This Latilactobacillus sakei subsp. sakei (strain 23K) (Lactobacillus sakei subsp. sakei) protein is Replication initiation control protein YabA.